The following is a 993-amino-acid chain: DNA-binding protein SMUBP-2 (993 aa).

Alanine 2 is modified (N-acetylalanine). Residues glycine 214–threonine 221, glutamine 403, tyrosine 442, and glutamate 571 contribute to the ATP site. The segment at threonine 638 to arginine 785 is SS DNA-binding. Disordered regions lie at residues tyrosine 651–glutamine 723, valine 782–proline 828, and valine 841–threonine 879. Composition is skewed to polar residues over residues histidine 653–alanine 662 and proline 669–glutamate 681. In terms of domain architecture, R3H spans glutamine 723–alanine 786. Residues proline 818–proline 828 show a composition bias toward basic and acidic residues. Residues arginine 842–glutamine 859 are compositionally biased toward polar residues. A Nuclear localization signal motif is present at residues lysine 864–lysine 868. The AN1-type zinc finger occupies valine 891 to alanine 940. Zn(2+)-binding residues include cysteine 897, cysteine 902, cysteine 913, cysteine 916, cysteine 921, histidine 924, histidine 930, and cysteine 932. The segment at arginine 971 to threonine 993 is disordered.

This sequence belongs to the DNA2/NAM7 helicase family. As to quaternary structure, homooligomer. Interacts with RUVBL1. Interacts with RUVBL2. Interacts with GTF3C1. Interacts with ABT1. Interacts with ribosomes. In terms of tissue distribution, expressed in all tissues examined. Expressed in the developing and adult human brain, with highest expression in the cerebellum. Moderately expressed in fibroblasts.

The protein localises to the nucleus. It localises to the cytoplasm. Its subcellular location is the cell projection. It is found in the axon. It carries out the reaction ATP + H2O = ADP + phosphate + H(+). Functionally, 5' to 3' helicase that unwinds RNA and DNA duplexes in an ATP-dependent reaction. Specific to 5'-phosphorylated single-stranded guanine-rich sequences. May play a role in RNA metabolism, ribosome biogenesis or initiation of translation. May play a role in regulation of transcription. Interacts with tRNA-Tyr. This is DNA-binding protein SMUBP-2 (IGHMBP2) from Homo sapiens (Human).